The primary structure comprises 248 residues: 2,3-bisphosphoglycerate-dependent phosphoglycerate mutase (248 aa).

Substrate-binding positions include 10 to 17 (RHGQSEWN), 23 to 24 (TG), Arg62, 89 to 92 (ERHY), Lys100, 116 to 117 (RR), and 183 to 184 (GN). The Tele-phosphohistidine intermediate role is filled by His11. The active-site Proton donor/acceptor is Glu89.

The protein belongs to the phosphoglycerate mutase family. BPG-dependent PGAM subfamily.

It catalyses the reaction (2R)-2-phosphoglycerate = (2R)-3-phosphoglycerate. Its pathway is carbohydrate degradation; glycolysis; pyruvate from D-glyceraldehyde 3-phosphate: step 3/5. Functionally, catalyzes the interconversion of 2-phosphoglycerate and 3-phosphoglycerate. This is 2,3-bisphosphoglycerate-dependent phosphoglycerate mutase from Corynebacterium diphtheriae (strain ATCC 700971 / NCTC 13129 / Biotype gravis).